A 151-amino-acid chain; its full sequence is MAPRKGKAPKEEQVISLGPQVADGENVFGVAHIFASFNDTFVHVTDLSGKETIARVTGGMKVKADRDESSPYAAMLAAQDVAVRCKEIGITALHVKLRATGGNRTKTPGPGAQSALRALARSGMKIGRIEDVTPIPSDCTRRKGGRRGRRL.

This sequence belongs to the universal ribosomal protein uS11 family.

In Podocoryna carnea (Hydrozoan), this protein is Small ribosomal subunit protein uS11 (RPS14).